A 1337-amino-acid polypeptide reads, in one-letter code: uncharacterized protein (1337 aa).

Disordered stretches follow at residues 1-94 (MPTS…QSSA) and 119-174 (ARDI…PSFF). Low complexity-rich tracts occupy residues 18 to 37 (SNTSSTESSSSNNSSTASGS) and 68 to 79 (SSTHFQSSHSVS). Positions 80-94 (NAHNQSPLNQSQSSA) are enriched in polar residues. Positions 123 to 147 (PQQPSHSQNPSSSSSSSSSQSSQHS) are enriched in low complexity. A compositionally biased stretch (basic and acidic residues) spans 157-167 (NEKKSLDDPSP). The next 6 membrane-spanning stretches (helical) occupy residues 209–229 (GLKPVIRAAINSWIAFLLVLA), 241–261 (FFVVITSILVPAMEPIAPMLW), 267–287 (FLLLFSAYAWTVLAAKLATVA), 328–348 (VRPLPSIIWALFEFSAVALFI), 361–381 (CVFSIICTAVSANMGPMYPYF), and 387–407 (LFFIVPNCVQTGITIGCTLFI). 2 disordered regions span residues 623 to 662 (SHVRTGSNNSEAPLAAKTSTTKRNGDLLEPQSPSLRSHKS) and 868 to 894 (YDENIHNDVDKDMNQSSTQPRDPDADH). The segment covering 626–644 (RTGSNNSEAPLAAKTSTTK) has biased composition (polar residues). The segment covering 868 to 880 (YDENIHNDVDKDM) has biased composition (basic and acidic residues). Helical transmembrane passes span 917 to 937 (MNVFVLKVGTLAVICTIPAFC), 975 to 995 (IFGTFFGAILGMVIWYTGSGH), 997 to 1017 (LGNAYGLAAVWGAAIPFIQFI), 1021 to 1041 (FVILTPMPAVIFCVTAALTVT), 1066 to 1086 (FLTVAAGITVAFIFSFLPQPR), and 1275 to 1295 (FAVGCTIAYAVVNHIDRIMFI).

It is found in the membrane. This is an uncharacterized protein from Schizosaccharomyces pombe (strain 972 / ATCC 24843) (Fission yeast).